The primary structure comprises 306 residues: uncharacterized protein (306 aa).

This is an uncharacterized protein from Saccharomyces cerevisiae (strain ATCC 204508 / S288c) (Baker's yeast).